The sequence spans 309 residues: Taste receptor type 2 member 20 (309 aa).

Residues 1–6 (MMSFLH) are Extracellular-facing. The helical transmembrane segment at 7–27 (IVFSILVVVAFILGNFANGFI) threads the bilayer. Topologically, residues 28-46 (ALINFIAWVKRQKISSADQ) are cytoplasmic. The chain crosses the membrane as a helical span at residues 47-67 (IIAALAVSRVGLLWVILLHWY). The Extracellular portion of the chain corresponds to 68 to 79 (STVLNPTSSNLK). A helical membrane pass occupies residues 80-100 (VIIFISNAWAVTNHFSIWLAT). Topologically, residues 101 to 125 (SLSIFYLLKIVNFSRLIFHHLKRKA) are cytoplasmic. Residues 126 to 146 (KSVVLVIVLGSLFFLVCXLVM) traverse the membrane as a helical segment. The Extracellular portion of the chain corresponds to 147–178 (KNTYINVWTEECEGNVTWKIKLRNAMHLSNLT). A helical membrane pass occupies residues 179-199 (VAMLANLIPFTLTLISFLLLI). The Cytoplasmic segment spans residues 200–229 (YSLCKHLKKMQLHGKGSQDPSTKIHIKALQ). The chain crosses the membrane as a helical span at residues 230-250 (TVTSFLILLAIYFLCLITSFW). Topologically, residues 251–259 (NSKMRPKEI) are extracellular. Residues 260–280 (VLMLCQAFGIIYPSFHSFILI) traverse the membrane as a helical segment. Residues 281–309 (WGNKTLKQTFLSVLWQVTCWAKGQNQSTP) lie on the Cytoplasmic side of the membrane.

This sequence belongs to the G-protein coupled receptor T2R family.

The protein resides in the membrane. Functionally, receptor that may play a role in the perception of bitterness and is gustducin-linked. May play a role in sensing the chemical composition of the gastrointestinal content. The activity of this receptor may stimulate alpha gustducin, mediate PLC-beta-2 activation and lead to the gating of TRPM5. The sequence is that of Taste receptor type 2 member 20 (TAS2R20) from Pan troglodytes (Chimpanzee).